A 155-amino-acid chain; its full sequence is Small ribosomal subunit protein uS7 (155 aa).

Belongs to the universal ribosomal protein uS7 family. Part of the 30S ribosomal subunit. Contacts proteins S9 and S11.

One of the primary rRNA binding proteins, it binds directly to 16S rRNA where it nucleates assembly of the head domain of the 30S subunit. Is located at the subunit interface close to the decoding center, probably blocks exit of the E-site tRNA. The polypeptide is Small ribosomal subunit protein uS7 (Ureaplasma parvum serovar 3 (strain ATCC 27815 / 27 / NCTC 11736)).